The following is a 460-amino-acid chain: ATP synthase subunit beta (460 aa).

149-156 is an ATP binding site; it reads GGAGVGKT.

It belongs to the ATPase alpha/beta chains family. In terms of assembly, F-type ATPases have 2 components, CF(1) - the catalytic core - and CF(0) - the membrane proton channel. CF(1) has five subunits: alpha(3), beta(3), gamma(1), delta(1), epsilon(1). CF(0) has three main subunits: a(1), b(2) and c(9-12). The alpha and beta chains form an alternating ring which encloses part of the gamma chain. CF(1) is attached to CF(0) by a central stalk formed by the gamma and epsilon chains, while a peripheral stalk is formed by the delta and b chains.

The protein localises to the cell inner membrane. It catalyses the reaction ATP + H2O + 4 H(+)(in) = ADP + phosphate + 5 H(+)(out). Its function is as follows. Produces ATP from ADP in the presence of a proton gradient across the membrane. The catalytic sites are hosted primarily by the beta subunits. The chain is ATP synthase subunit beta from Nitrosomonas europaea (strain ATCC 19718 / CIP 103999 / KCTC 2705 / NBRC 14298).